The following is a 164-amino-acid chain: Endoribonuclease YbeY (164 aa).

Zn(2+) contacts are provided by His120, His124, and His130.

Belongs to the endoribonuclease YbeY family. Zn(2+) is required as a cofactor.

Its subcellular location is the cytoplasm. Its function is as follows. Single strand-specific metallo-endoribonuclease involved in late-stage 70S ribosome quality control and in maturation of the 3' terminus of the 16S rRNA. This is Endoribonuclease YbeY from Acidothermus cellulolyticus (strain ATCC 43068 / DSM 8971 / 11B).